The chain runs to 406 residues: High mobility group nucleosome-binding domain-containing protein 5 (406 aa).

The segment at 1–406 (MPKRKAAGDV…GEKEEPLSIV (406 aa)) is disordered. Residue threonine 29 is modified to Phosphothreonine. Basic residues predominate over residues 35–44 (KRASTSRKTK). 5 stretches are compositionally biased toward basic and acidic residues: residues 63–72 (TKPEDVKDEC), 92–101 (MEAEEVKEQI), 110–126 (GEKKEAVAAEAKDDELK), 136–159 (EDGKEHKDTGEEVEDGKIEEEGLN), and 166–187 (KSEDAEVSKDEEEKGDNEKGED). Residue lysine 64 forms a Glycyl lysine isopeptide (Lys-Gly) (interchain with G-Cter in SUMO2) linkage. Lysine 98 participates in a covalent cross-link: Glycyl lysine isopeptide (Lys-Gly) (interchain with G-Cter in SUMO1); alternate. Lysine 98 is covalently cross-linked (Glycyl lysine isopeptide (Lys-Gly) (interchain with G-Cter in SUMO2); alternate). Residue lysine 121 forms a Glycyl lysine isopeptide (Lys-Gly) (interchain with G-Cter in SUMO2) linkage. Residues 188–200 (GKEEGDEKEEEKD) are compositionally biased toward acidic residues. Basic and acidic residues-rich tracts occupy residues 201 to 239 (DKEGDTGTEKEVKEQNKEAEEDDGKCKEEENKEVGKEGQ), 246 to 266 (EDLHEEVGKEDLHEEDGKEGQ), 272 to 284 (KEIHHEEDGKEGQ), and 290 to 311 (KEYLHEEDGEEGQPKEDQKEGQ). Residues 312 to 325 (PEEDGKEDQPEEDG) are compositionally biased toward acidic residues. Over residues 326–365 (KEGQCKEDGKEGHHEEGGKEDLHEEDGKEKDGGKEDRKEE) the composition is skewed to basic and acidic residues. A compositionally biased stretch (acidic residues) spans 366-376 (GEQEVAVDEGS). Residues 377 to 406 (DENKVEAEEEGAENKDFKQDGEKEEPLSIV) are compositionally biased toward basic and acidic residues.

It belongs to the HMGN family. In terms of tissue distribution, expressed in liver, spleen, lung, heart, kidney, muscle and brain (at protein level). Widely expressed with highest levels in submaxillary gland, thymus, kidney and liver and lowest levels in brain, lung, pancreas and eye.

It localises to the nucleus. Preferentially binds to euchromatin and modulates cellular transcription by counteracting linker histone-mediated chromatin compaction. In Mus musculus (Mouse), this protein is High mobility group nucleosome-binding domain-containing protein 5 (Hmgn5).